The chain runs to 140 residues: Large ribosomal subunit protein uL14 (140 aa).

It belongs to the universal ribosomal protein uL14 family.

This chain is Large ribosomal subunit protein uL14 (RpL23), found in Drosophila melanogaster (Fruit fly).